A 163-amino-acid chain; its full sequence is General stress protein 16O (163 aa).

The span at Gln-19–Glu-30 shows a compositional bias: basic and acidic residues. Disordered regions lie at residues Gln-19 to Thr-55 and Ala-115 to Lys-163. The dksA C4-type; degenerate zinc-finger motif lies at Cys-89–Thr-123. Positions Ser-127–Asp-146 are enriched in basic and acidic residues.

This is General stress protein 16O (yocK) from Bacillus subtilis (strain 168).